We begin with the raw amino-acid sequence, 560 residues long: Endogenous retrovirus group K member 18 Env polyprotein (560 aa).

The segment at 355-375 is fusion peptide; the sequence is FIFTLIAVIMGLIAVTATAAV. A helical membrane pass occupies residues 522 to 542; that stretch reads IRSTMIINLILIVVCLFCLLL.

Belongs to the beta type-B retroviral envelope protein family. HERV class-II K(HML-2) env subfamily. In terms of assembly, the surface (SU) and transmembrane (TM) proteins form a heterodimer. SU and TM are attached by noncovalent interactions or by a labile interchain disulfide bond. Post-translationally, specific enzymatic cleavages in vivo yield the mature SU and TM proteins. As to expression, expressed at higher level in the thymus. Expressed at lower level in peripheral blood lymphocytes.

The protein resides in the cell membrane. It localises to the virion. In terms of biological role, retroviral envelope proteins mediate receptor recognition and membrane fusion during early infection. Endogenous envelope proteins may have kept, lost or modified their original function during evolution. This envelope protein has superantigenic properties. SU mediates receptor recognition. Functionally, TM anchors the envelope heterodimer to the viral membrane through one transmembrane domain. The other hydrophobic domain, called fusion peptide, mediates fusion of the viral membrane with the target cell membrane. The polypeptide is Endogenous retrovirus group K member 18 Env polyprotein (ERVK-18) (Homo sapiens (Human)).